The chain runs to 68 residues: Guanine nucleotide-binding protein G(I)/G(S)/G(O) subunit gamma-10 (68 aa).

Serine 2 bears the N-acetylserine mark. Cysteine 65 bears the Cysteine methyl ester mark. Cysteine 65 carries S-geranylgeranyl cysteine lipidation. Positions 66–68 (ALL) are cleaved as a propeptide — removed in mature form.

It belongs to the G protein gamma family. In terms of assembly, g proteins are composed of 3 units, alpha, beta and gamma. As to expression, abundantly and ubiquitously expressed.

It is found in the cell membrane. Its function is as follows. Guanine nucleotide-binding proteins (G proteins) are involved as a modulator or transducer in various transmembrane signaling systems. The beta and gamma chains are required for the GTPase activity, for replacement of GDP by GTP, and for G protein-effector interaction. Interacts with beta-1 and beta-2, but not with beta-3. This chain is Guanine nucleotide-binding protein G(I)/G(S)/G(O) subunit gamma-10 (GNG10), found in Homo sapiens (Human).